Reading from the N-terminus, the 246-residue chain is MHLPQMGYDRAITVFSPDGRLFQVEYAREAVKRGATAIGIKCKEGVILIADKRVGSKLLEADTIEKIYKIDEHICAATSGLVADARVLIDRARIEAQINRLTYDEPITVKELAKKICDFKQQYTQYGGVRPFGVSLLIAGVDEVPKLYETDPSGALLEYKATAIGMGRNAVTEFFEKEYRDDLSFDDAMVLGLVAMGLSIESELVPENIEVGYVKVDDRTFKEVSPEELKPYVERANERIRELLKK.

Belongs to the peptidase T1A family. The 20S proteasome core is composed of 14 alpha and 14 beta subunits that assemble into four stacked heptameric rings, resulting in a barrel-shaped structure. The two inner rings, each composed of seven catalytic beta subunits, are sandwiched by two outer rings, each composed of seven alpha subunits. The catalytic chamber with the active sites is on the inside of the barrel. Has probably a gated structure, the ends of the cylinder being occluded by the N-termini of the alpha-subunits. Is likely capped at one or both ends by the proteasome regulatory ATPase, PAN.

It is found in the cytoplasm. With respect to regulation, the formation of the proteasomal ATPase PAN-20S proteasome complex, via the docking of the C-termini of PAN into the intersubunit pockets in the alpha-rings, triggers opening of the gate for substrate entry. Interconversion between the open-gate and close-gate conformations leads to a dynamic regulation of the 20S proteasome proteolysis activity. Functionally, component of the proteasome core, a large protease complex with broad specificity involved in protein degradation. The chain is Proteasome subunit alpha from Archaeoglobus fulgidus (strain ATCC 49558 / DSM 4304 / JCM 9628 / NBRC 100126 / VC-16).